Consider the following 867-residue polypeptide: MDLGSMLYNSFNNITWSTTTLPLDRLISSYRLPQIVKLDSGESVEGLRENDYLLIHSCRQWTTITAHSLEEGHYVIGPKIEIPVHYEGQFKLLEQDRDIKEPVQYYNSVEEVAKAFPERVYVMEEISFNFKMASGESNEDTEVYNITLSTGDELTLMGQAELLYAKSSREKSRFNTIFKRIGKLNSISKLGRGKMPCLICMNHRTNESISLPFQCRGRFSTCSQLELQMQEGEHTIRTIVEKTRLPVNVMVPSSPPRNPHDLHLIREGHRYKLVNIQTKTVVVCCALRSNKILPVHFPLHVSTALPRLLVPEGLLQGESWFETVVHRWFTYCQEQFDIDDYSRAVRDVRVDWIEDGKSPKKSSAGGTGSGSAICNSSGSGSNGCPSHLHLPSSLSSARDELTQSFHRLSVCVYGNNLHGNSEVNLQGCVSLCGDCAPAEPPDADYLFPELQENSSGSLKSDVPYEELWLDHVKNAGPVLDHNEGVRGNSLSSGCTTALPYPKAGPTSALLSADVNLPPPPVPPKSEAVKEECRLLDAPPIPPRSSKQAGSSSATVPYPSAKPRQKDTRSPSPTLSYYSSGLHSIGGEGESQIESDDQNHACYPCSWIRPDASESSKPLPCLNPSVNASFSRLSWPNDFCGADSYKGEDFQSLHCRSYSSYPRKRTPGTPKACPSGLLDFDKRANFEGKAVSSKVQQVTQSAQFCTKSTSYNMDMCRDKPTDECITKQSQSCPILPPRTPKCTDAKKDAEAATTDTADADAVELESKSCSPDGPHPGTTDVFSVSHPVATGLSWQPPSNLSGISIEEISKSLRFIGLSEDVVSLFVQEKIDGNLLLQLTEEILSEDFKLSKLQVKKLMQFINGWRPKM.

The segment at 12–322 (NNITWSTTTL…GLLQGESWFE (311 aa)) is CABIT. A Phosphotyrosine modification is found at tyrosine 464. Disordered regions lie at residues 511-530 (SADV…AVKE), 536-594 (DAPP…QIES), and 735-758 (PPRT…TADA). Polar residues-rich tracts occupy residues 544 to 554 (SSKQAGSSSAT) and 569 to 581 (SPSP…SSGL). Residues 740–749 (KCTDAKKDAE) are compositionally biased toward basic and acidic residues. An SAM domain is found at 802–867 (ISIEEISKSL…QFINGWRPKM (66 aa)).

The protein belongs to the GAREM family.

Its function is as follows. Adapter protein that may provide a link between cell surface epidermal growth factor receptor and the MAPK/ERK signaling pathway. May promote cell proliferation. In Danio rerio (Zebrafish), this protein is GRB2-associated and regulator of MAPK protein 1 (garem1).